The following is a 240-amino-acid chain: UDP-2,3-diacylglucosamine hydrolase (240 aa).

Residues aspartate 8, histidine 10, aspartate 41, asparagine 79, and histidine 114 each coordinate Mn(2+). 79-80 (NR) contributes to the substrate binding site. Aspartate 122, serine 160, asparagine 164, lysine 167, and histidine 195 together coordinate substrate. Residues histidine 195 and histidine 197 each coordinate Mn(2+).

This sequence belongs to the LpxH family. Mn(2+) is required as a cofactor.

It is found in the cell inner membrane. The enzyme catalyses UDP-2-N,3-O-bis[(3R)-3-hydroxytetradecanoyl]-alpha-D-glucosamine + H2O = 2-N,3-O-bis[(3R)-3-hydroxytetradecanoyl]-alpha-D-glucosaminyl 1-phosphate + UMP + 2 H(+). Its pathway is glycolipid biosynthesis; lipid IV(A) biosynthesis; lipid IV(A) from (3R)-3-hydroxytetradecanoyl-[acyl-carrier-protein] and UDP-N-acetyl-alpha-D-glucosamine: step 4/6. Functionally, hydrolyzes the pyrophosphate bond of UDP-2,3-diacylglucosamine to yield 2,3-diacylglucosamine 1-phosphate (lipid X) and UMP by catalyzing the attack of water at the alpha-P atom. Involved in the biosynthesis of lipid A, a phosphorylated glycolipid that anchors the lipopolysaccharide to the outer membrane of the cell. The protein is UDP-2,3-diacylglucosamine hydrolase of Klebsiella pneumoniae subsp. pneumoniae (strain ATCC 700721 / MGH 78578).